We begin with the raw amino-acid sequence, 365 residues long: Iron-sulfur cluster assembly protein SufC (365 aa).

The 247-residue stretch at 118–364 (LEINDLHAIE…ESDGYAQFVE (247 aa)) folds into the ABC transporter domain. ATP is bound at residue 152–159 (GRNGSGKS).

This sequence belongs to the ABC transporter superfamily. Ycf16 family. In terms of assembly, component of a complex composed of SufB, SufC and SufD in a stoichiometric ratio of 1:2:1. Interacts with SufB. Interacts with SufD; the interaction enhances the ATPase activity of SufC.

The protein resides in the plastid. It localises to the apicoplast. The catalysed reaction is ATP + H2O = ADP + phosphate + H(+). It functions in the pathway cofactor biosynthesis; iron-sulfur cluster biosynthesis. Its function is as follows. Participates in the sulfur mobilization (SUF) pathway for iron-sulfur (Fe-S) cluster biogenesis. As part of a complex consisting of SufB-SufC(2)-SufD, involved in assembly of [4Fe-4S] clusters. Exhibits ATPase activity. The polypeptide is Iron-sulfur cluster assembly protein SufC (Plasmodium berghei (strain Anka)).